A 497-amino-acid chain; its full sequence is Probable cytosol aminopeptidase (497 aa).

Mn(2+) contacts are provided by Lys263 and Asp268. Residue Lys275 is part of the active site. Residues Asp286, Asp345, and Glu347 each contribute to the Mn(2+) site. Arg349 is an active-site residue.

The protein belongs to the peptidase M17 family. Mn(2+) is required as a cofactor.

Its subcellular location is the cytoplasm. It carries out the reaction Release of an N-terminal amino acid, Xaa-|-Yaa-, in which Xaa is preferably Leu, but may be other amino acids including Pro although not Arg or Lys, and Yaa may be Pro. Amino acid amides and methyl esters are also readily hydrolyzed, but rates on arylamides are exceedingly low.. The catalysed reaction is Release of an N-terminal amino acid, preferentially leucine, but not glutamic or aspartic acids.. Presumably involved in the processing and regular turnover of intracellular proteins. Catalyzes the removal of unsubstituted N-terminal amino acids from various peptides. This chain is Probable cytosol aminopeptidase, found in Methylorubrum populi (strain ATCC BAA-705 / NCIMB 13946 / BJ001) (Methylobacterium populi).